The sequence spans 151 residues: Large ribosomal subunit protein bL9 (151 aa).

Belongs to the bacterial ribosomal protein bL9 family.

Binds to the 23S rRNA. The chain is Large ribosomal subunit protein bL9 from Pseudothermotoga lettingae (strain ATCC BAA-301 / DSM 14385 / NBRC 107922 / TMO) (Thermotoga lettingae).